Here is a 289-residue protein sequence, read N- to C-terminus: MDKVLLGCHVSMNKQNNYLVGSVNEAISYKANTFMIFTGPPQSTLRTNTNHLYINQMHELMNSYKIDAKDLVVHAPYIINIANSVDQNKWEFAVNFLIQEIKRCEEIKIPTLVLHPGSYTTGNYKDSLNQIIKALDMVSNYQVNVKIALETMSGKGTEVCSKLEDFKYILDNVKNKDKVGVCLDTCHLHDAGYDLSKWTEFKEQIKQNFNLDKVLCIHLNDSKNMISSHKDRHANIGYGFVGFDTLVNVVFDKDFSNISKILETPYIDKKAPYKIEIEDLLNKTFTNRL.

Zn(2+) contacts are provided by H74, H115, E150, D184, H187, H218, D231, H233, and E263.

It belongs to the AP endonuclease 2 family. The cofactor is Zn(2+).

It carries out the reaction Endonucleolytic cleavage to 5'-phosphooligonucleotide end-products.. Functionally, endonuclease IV plays a role in DNA repair. It cleaves phosphodiester bonds at apurinic or apyrimidinic (AP) sites, generating a 3'-hydroxyl group and a 5'-terminal sugar phosphate. The protein is Probable endonuclease 4 of Mycoplasma capricolum subsp. capricolum (strain California kid / ATCC 27343 / NCTC 10154).